We begin with the raw amino-acid sequence, 297 residues long: 4-hydroxy-tetrahydrodipicolinate synthase (297 aa).

Pyruvate is bound at residue Thr-46. Tyr-134 functions as the Proton donor/acceptor in the catalytic mechanism. The active-site Schiff-base intermediate with substrate is the Lys-162. Ile-204 is a binding site for pyruvate.

This sequence belongs to the DapA family. As to quaternary structure, homotetramer; dimer of dimers.

The protein resides in the cytoplasm. It catalyses the reaction L-aspartate 4-semialdehyde + pyruvate = (2S,4S)-4-hydroxy-2,3,4,5-tetrahydrodipicolinate + H2O + H(+). Its pathway is amino-acid biosynthesis; L-lysine biosynthesis via DAP pathway; (S)-tetrahydrodipicolinate from L-aspartate: step 3/4. Functionally, catalyzes the condensation of (S)-aspartate-beta-semialdehyde [(S)-ASA] and pyruvate to 4-hydroxy-tetrahydrodipicolinate (HTPA). In Stenotrophomonas maltophilia (strain R551-3), this protein is 4-hydroxy-tetrahydrodipicolinate synthase.